A 258-amino-acid chain; its full sequence is 3-deoxy-manno-octulosonate cytidylyltransferase (258 aa).

The protein belongs to the KdsB family.

It is found in the cytoplasm. It catalyses the reaction 3-deoxy-alpha-D-manno-oct-2-ulosonate + CTP = CMP-3-deoxy-beta-D-manno-octulosonate + diphosphate. Its pathway is nucleotide-sugar biosynthesis; CMP-3-deoxy-D-manno-octulosonate biosynthesis; CMP-3-deoxy-D-manno-octulosonate from 3-deoxy-D-manno-octulosonate and CTP: step 1/1. It participates in bacterial outer membrane biogenesis; lipopolysaccharide biosynthesis. Activates KDO (a required 8-carbon sugar) for incorporation into bacterial lipopolysaccharide in Gram-negative bacteria. This is 3-deoxy-manno-octulosonate cytidylyltransferase from Pasteurella multocida (strain Pm70).